Reading from the N-terminus, the 158-residue chain is Large ribosomal subunit protein uL18 (158 aa).

Belongs to the universal ribosomal protein uL18 family. As to quaternary structure, part of the 50S ribosomal subunit. Contacts the 5S and 23S rRNAs.

Functionally, this is one of the proteins that bind and probably mediate the attachment of the 5S RNA into the large ribosomal subunit, where it forms part of the central protuberance. This is Large ribosomal subunit protein uL18 from Picrophilus torridus (strain ATCC 700027 / DSM 9790 / JCM 10055 / NBRC 100828 / KAW 2/3).